The following is a 697-amino-acid chain: Elongation factor G 2 (697 aa).

Residues 5–280 (SKYRNIGIFA…AVVDYLPAPD (276 aa)) form the tr-type G domain. GTP-binding positions include 14 to 21 (AHVDAGKT), 78 to 82 (DTPGH), and 132 to 135 (NKLD).

Belongs to the TRAFAC class translation factor GTPase superfamily. Classic translation factor GTPase family. EF-G/EF-2 subfamily.

It localises to the cytoplasm. In terms of biological role, catalyzes the GTP-dependent ribosomal translocation step during translation elongation. During this step, the ribosome changes from the pre-translocational (PRE) to the post-translocational (POST) state as the newly formed A-site-bound peptidyl-tRNA and P-site-bound deacylated tRNA move to the P and E sites, respectively. Catalyzes the coordinated movement of the two tRNA molecules, the mRNA and conformational changes in the ribosome. The chain is Elongation factor G 2 from Shewanella denitrificans (strain OS217 / ATCC BAA-1090 / DSM 15013).